A 286-amino-acid chain; its full sequence is Acetylglutamate kinase (286 aa).

Substrate contacts are provided by residues 63–64 (GG), Arg85, and Asn178.

The protein belongs to the acetylglutamate kinase family. ArgB subfamily.

The protein localises to the cytoplasm. The catalysed reaction is N-acetyl-L-glutamate + ATP = N-acetyl-L-glutamyl 5-phosphate + ADP. It participates in amino-acid biosynthesis; L-arginine biosynthesis; N(2)-acetyl-L-ornithine from L-glutamate: step 2/4. Catalyzes the ATP-dependent phosphorylation of N-acetyl-L-glutamate. The polypeptide is Acetylglutamate kinase (Clostridioides difficile (strain 630) (Peptoclostridium difficile)).